The primary structure comprises 456 residues: Perilipin-5 (456 aa).

Residues 1–20 (MSEDEAAQAPGPSLSEQDQQ) are disordered. An interaction with LIPE region spans residues 1 to 108 (MSEDEAAQAP…KLEEKLPFLQ (108 aa)). The essential for lipid droplet targeting stretch occupies residues 1 to 173 (MSEDEAAQAP…HFLPMTEEEL (173 aa)). Phosphoserine is present on residues S2, S148, and S324. Residues 185-456 (VGSVEEQRKH…KHTLMPELDF (272 aa)) form an interaction with PNPLA2 and ABHD5 region. The tract at residues 420-456 (AWQAQHGEGTVLSGNIPEEEPEPPSRPKHTLMPELDF) is disordered. Residues 438-456 (EEPEPPSRPKHTLMPELDF) are recruits mitochondria at the lipid droplet surface.

Belongs to the perilipin family. As to quaternary structure, homooligomer. Interacts with PNPLA2; prevents interaction of PNPLA2 with ABHD5. Interacts with ABHD5; targets ABHD5 to lipid droplets and promotes interaction of ABHD5 with PNPLA2. Interacts with LIPE. Post-translationally, phosphorylated by PKA. Phosphorylated on serine in skeletal muscle at rest or upon lipolytic stimulation.

The protein localises to the lipid droplet. Its subcellular location is the cytoplasm. It is found in the mitochondrion. Functionally, lipid droplet-associated protein that maintains the balance between lipogenesis and lipolysis and also regulates fatty acid oxidation in oxidative tissues. Recruits mitochondria to the surface of lipid droplets and is involved in lipid droplet homeostasis by regulating both the storage of fatty acids in the form of triglycerides and the release of fatty acids for mitochondrial fatty acid oxidation. In lipid droplet triacylglycerol hydrolysis, plays a role as a scaffolding protein for three major key lipolytic players: ABHD5, PNPLA2 and LIPE. Reduces the triacylglycerol hydrolase activity of PNPLA2 by recruiting and sequestering PNPLA2 to lipid droplets. Phosphorylation by PKA enables lipolysis probably by promoting release of ABHD5 from the perilipin scaffold and by facilitating interaction of ABHD5 with PNPLA2. Also increases lipolysis through interaction with LIPE and upon PKA-mediated phosphorylation of LIPE. The protein is Perilipin-5 (Plin5) of Ovis aries (Sheep).